The primary structure comprises 446 residues: N-succinylarginine dihydrolase (446 aa).

Residues 19–28 (AGLSFGNVAS), asparagine 110, and 137–138 (HR) each bind substrate. Residue glutamate 174 is part of the active site. Arginine 213 is a substrate binding site. Histidine 249 is a catalytic residue. Substrate is bound by residues aspartate 251 and asparagine 364. Catalysis depends on cysteine 370, which acts as the Nucleophile.

Belongs to the succinylarginine dihydrolase family. Homodimer.

The catalysed reaction is N(2)-succinyl-L-arginine + 2 H2O + 2 H(+) = N(2)-succinyl-L-ornithine + 2 NH4(+) + CO2. Its pathway is amino-acid degradation; L-arginine degradation via AST pathway; L-glutamate and succinate from L-arginine: step 2/5. Catalyzes the hydrolysis of N(2)-succinylarginine into N(2)-succinylornithine, ammonia and CO(2). This is N-succinylarginine dihydrolase from Burkholderia orbicola (strain MC0-3).